The following is a 310-amino-acid chain: Solute carrier family 25 member 47 (310 aa).

3 Solcar repeats span residues 1-80 (MDFV…CLAH), 93-208 (PTKA…LSEW), and 217-304 (PDVL…VLRL). 6 consecutive transmembrane segments (helical) span residues 3 to 23 (FVAG…LDTV), 49 to 69 (LWGF…VSSV), 98 to 116 (ITLS…TSPT), 192 to 212 (GHSF…LTPA), 219 to 239 (VLGV…VATP), and 275 to 295 (VLFK…MVVF).

It belongs to the mitochondrial carrier (TC 2.A.29) family.

Its subcellular location is the mitochondrion inner membrane. The protein localises to the mitochondrion outer membrane. It carries out the reaction NAD(+)(in) = NAD(+)(out). It catalyses the reaction acetyl-CoA(in) = acetyl-CoA(out). Functionally, mitochondrial NAD(+) transporter that acts as a 'metabolic gate' in hepatic lipogenesis. Provides NAD(+) substrate to mitochondrial SIRT3 deacetylase and enables its NAD(+)-dependent activities in mitochondrial energy metabolism. This triggers downstream activation of PRKAA1/AMPK-alpha signaling cascade that negatively regulates sterol regulatory element-binding protein (SREBP) transcriptional activities and ATP-consuming lipogenesis to restore cellular energy balance. May transport other mitochondrial metabolites having an aromatic nucleotide and phosphate groups, such as acetyl-CoA. Does not transport amino acids. The transport mechanism remains to be elucidated. The protein is Solute carrier family 25 member 47 of Rattus norvegicus (Rat).